We begin with the raw amino-acid sequence, 184 residues long: Gastrokine-1 (184 aa).

The first 20 residues, 1 to 20 (MKLTMFVVGLLGLLAAPGFA), serve as a signal peptide directing secretion. Residues 54–148 (NNGWDSWNSL…MCRGIPTYVA (95 aa)) enclose the BRICHOS domain. Residues cysteine 81 and cysteine 140 are joined by a disulfide bond.

The protein belongs to the gastrokine family. As to expression, expressed in the stomach. Highly expressed specifically in surface cells of the antrum mucosa from where it is secreted.

It is found in the secreted. The protein resides in the cytoplasmic granule. The protein localises to the golgi apparatus. In terms of biological role, has mitogenic activity and may be involved in maintaining the integrity of the gastric mucosal epithelium. The polypeptide is Gastrokine-1 (Gkn1) (Mus musculus (Mouse)).